The chain runs to 247 residues: MQTQVLFEHPLNEKMRTWLRIEFLIQQLTVNLPIVDHAGALHFFRNVSELLDVFERGEVRTELLKELDRQQRKLQTWIGVPGVDQSRIEALIQQLKAAGSVLISAPRIGQFLREDRLIALVRQRLSIPGGCCSFDLPTLHIWLHLPQAQRDSQVETWIASLNPLTQALTMVLDLIRQSAPFRKQTSLNGFYQDNGGDADLLRLNLSLDSQLYPQISGHKSRFAIRFMPLDTENGQVPERLDFELACC.

The protein belongs to the ZapD family. As to quaternary structure, interacts with FtsZ.

It is found in the cytoplasm. In terms of biological role, cell division factor that enhances FtsZ-ring assembly. Directly interacts with FtsZ and promotes bundling of FtsZ protofilaments, with a reduction in FtsZ GTPase activity. This chain is Cell division protein ZapD, found in Shigella sonnei (strain Ss046).